The sequence spans 397 residues: Vacuolar protein sorting-associated protein 37A (397 aa).

At Ser18 the chain carries Phosphoserine. A VPS37 C-terminal domain is found at 308–397 (KSTFEKKMQR…AMHSQFHAPL (90 aa)).

It belongs to the VPS37 family. As to quaternary structure, component of the ESCRT-I complex (endosomal sorting complex required for transport I) which consists of TSG101, VPS28, a VPS37 protein (VPS37A to -D) and MVB12A or MVB12B in a 1:1:1:1 stoichiometry. Interacts with TSG101, VPS28 and HGS. Component of an ESCRT-I complex (endosomal sorting complex required for transport I) which consists of TSG101, VPS28, VPS37A and UBAP1 in a 1:1:1:1 stoichiometry.

It localises to the late endosome membrane. The protein localises to the nucleus. In terms of biological role, component of the ESCRT-I complex, a regulator of vesicular trafficking process. Required for the sorting of endocytic ubiquitinated cargos into multivesicular bodies. May be involved in cell growth and differentiation. The protein is Vacuolar protein sorting-associated protein 37A (Vps37a) of Mus musculus (Mouse).